The chain runs to 184 residues: Adenine phosphoribosyltransferase (184 aa).

This sequence belongs to the purine/pyrimidine phosphoribosyltransferase family. As to quaternary structure, homodimer.

It localises to the cytoplasm. It catalyses the reaction AMP + diphosphate = 5-phospho-alpha-D-ribose 1-diphosphate + adenine. It functions in the pathway purine metabolism; AMP biosynthesis via salvage pathway; AMP from adenine: step 1/1. Functionally, catalyzes a salvage reaction resulting in the formation of AMP, that is energically less costly than de novo synthesis. This chain is Adenine phosphoribosyltransferase, found in Blochmanniella pennsylvanica (strain BPEN).